Reading from the N-terminus, the 89-residue chain is Large ribosomal subunit protein eL34 (89 aa).

The interval 45 to 71 (GIPRGRPVEMRKLPKTKKRPERPMPHL) is disordered.

Belongs to the eukaryotic ribosomal protein eL34 family. As to quaternary structure, part of the 50S ribosomal subunit.

This chain is Large ribosomal subunit protein eL34, found in Pyrococcus furiosus (strain ATCC 43587 / DSM 3638 / JCM 8422 / Vc1).